A 418-amino-acid polypeptide reads, in one-letter code: Trafficking protein particle complex subunit 13 (418 aa).

This sequence belongs to the TRAPPC13 family. In terms of assembly, part of the multisubunit TRAPP (transport protein particle) complex.

This Rattus norvegicus (Rat) protein is Trafficking protein particle complex subunit 13 (Trappc13).